The primary structure comprises 150 residues: MVLCFPLLLLLLVLWGPVCLLHAWPKHLTRAHWFEIQHIQPSPLQCNRAMSGINNYTQHCKHQNTFRHDSFQNVAAVCDLLSIICKNRQHNCHQSSKPVNMTDCRLTSGKYPQCRHSAAAQYKFFIIACDPPQKSDPPYKLVPVHLDSIL.

The first 23 residues, 1–23 (MVLCFPLLLLLLVLWGPVCLLHA), serve as a signal peptide directing secretion. Histidine 38 serves as the catalytic Proton acceptor. 4 disulfide bridges follow: cysteine 46/cysteine 104, cysteine 60/cysteine 114, cysteine 78/cysteine 129, and cysteine 85/cysteine 92. N-linked (GlcNAc...) asparagine glycosylation is present at asparagine 55. Substrate contacts are provided by residues 61-65 (KHQNT) and lysine 86. Residue asparagine 100 is glycosylated (N-linked (GlcNAc...) asparagine). Position 105 (arginine 105) interacts with substrate. The Proton donor role is filled by histidine 145.

Belongs to the pancreatic ribonuclease family. Interacts (via N-terminus) with bacterial lipopolysaccharide (LPS).

Its subcellular location is the secreted. The protein localises to the lysosome. It localises to the cytoplasmic granule. In terms of biological role, ribonuclease which shows a preference for the pyrimidines uridine and cytosine. Has potent antibacterial activity against a range of Gram-positive and Gram-negative bacteria, including P.aeruginosa, A.baumanii, M.luteus, S.aureus, E.faecalis, E.faecium, S.saprophyticus and E.coli. Causes loss of bacterial membrane integrity, and also promotes agglutination of Gram-negative bacteria. Probably contributes to urinary tract sterility. Bactericidal activity is independent of RNase activity. The polypeptide is Ribonuclease K6 (RNASE6) (Miopithecus talapoin (Angolan talapoin)).